The chain runs to 307 residues: METPHIPVLLEEVLESFSRVPEGYFVDCTLGYAGHSSEILKRYDHLKHIGIDRDDEALAFSKKRLEPFRDRSTLYKGTFATVLPTLKEAPVTALLADFGVSSLQLDKKERGFAFDSETLDMRMDANAPLSAYEVVNTYPKEKLEYIFDTYGEVRSYKKLASAVVDARAKAPIESAKALSEIAKGVIPPGGKIHPATLMFQAIRIEVNNELGEIEGLLDAIEAKHYEGEVVSLITFHSLEDRLVKNRFRKWSQECICDPHAIRCTCGKKHALGKALSRKPVTASKEELRVNPRSRSAKLRSFRFKSDS.

Residues 33 to 35 (AGH), D52, L83, D97, and Q104 each bind S-adenosyl-L-methionine.

Belongs to the methyltransferase superfamily. RsmH family.

The protein resides in the cytoplasm. It carries out the reaction cytidine(1402) in 16S rRNA + S-adenosyl-L-methionine = N(4)-methylcytidine(1402) in 16S rRNA + S-adenosyl-L-homocysteine + H(+). Its function is as follows. Specifically methylates the N4 position of cytidine in position 1402 (C1402) of 16S rRNA. This Sulfurovum sp. (strain NBC37-1) protein is Ribosomal RNA small subunit methyltransferase H.